The primary structure comprises 231 residues: MSGAVALVLAGGSGTRMGRPKQFIELLGRPALYHTLRAFQEAREVERIYAVGEEERIRDLASGCGIDKLCGCARPGESRALSARNGLLLCGEEDGVICLIHDGSRCLVTPQLIGRVVRAVEEGADGAIPAVPVPDTIKVADGERVLKTLDRSSLRAAQTPQAFRLGLLRRVFSAPEEVLREATDDASLVERAGGEVRLVPGERTNIKLTSPEDLVLAEAILAARERRGSRL.

The protein belongs to the IspD/TarI cytidylyltransferase family. IspD subfamily.

The enzyme catalyses 2-C-methyl-D-erythritol 4-phosphate + CTP + H(+) = 4-CDP-2-C-methyl-D-erythritol + diphosphate. Its pathway is isoprenoid biosynthesis; isopentenyl diphosphate biosynthesis via DXP pathway; isopentenyl diphosphate from 1-deoxy-D-xylulose 5-phosphate: step 2/6. In terms of biological role, catalyzes the formation of 4-diphosphocytidyl-2-C-methyl-D-erythritol from CTP and 2-C-methyl-D-erythritol 4-phosphate (MEP). This is 2-C-methyl-D-erythritol 4-phosphate cytidylyltransferase from Rubrobacter xylanophilus (strain DSM 9941 / JCM 11954 / NBRC 16129 / PRD-1).